We begin with the raw amino-acid sequence, 196 residues long: GTP cyclohydrolase 1 (196 aa).

Cys-85, His-88, and Cys-158 together coordinate Zn(2+).

This sequence belongs to the GTP cyclohydrolase I family. In terms of assembly, homomer.

The enzyme catalyses GTP + H2O = 7,8-dihydroneopterin 3'-triphosphate + formate + H(+). Its pathway is cofactor biosynthesis; 7,8-dihydroneopterin triphosphate biosynthesis; 7,8-dihydroneopterin triphosphate from GTP: step 1/1. The protein is GTP cyclohydrolase 1 of Corynebacterium aurimucosum (strain ATCC 700975 / DSM 44827 / CIP 107346 / CN-1) (Corynebacterium nigricans).